A 381-amino-acid polypeptide reads, in one-letter code: 3-dehydroquinate synthase (381 aa).

NAD(+) contacts are provided by residues 81–86, 115–119, 139–140, lysine 152, and lysine 161; these read EGESSK, GVIGD, and TS. Glutamate 194, histidine 256, and histidine 274 together coordinate Zn(2+).

It belongs to the sugar phosphate cyclases superfamily. Dehydroquinate synthase family. It depends on Co(2+) as a cofactor. The cofactor is Zn(2+). NAD(+) serves as cofactor.

Its subcellular location is the cytoplasm. The enzyme catalyses 7-phospho-2-dehydro-3-deoxy-D-arabino-heptonate = 3-dehydroquinate + phosphate. Its pathway is metabolic intermediate biosynthesis; chorismate biosynthesis; chorismate from D-erythrose 4-phosphate and phosphoenolpyruvate: step 2/7. Catalyzes the conversion of 3-deoxy-D-arabino-heptulosonate 7-phosphate (DAHP) to dehydroquinate (DHQ). The polypeptide is 3-dehydroquinate synthase (Rhodopseudomonas palustris (strain ATCC BAA-98 / CGA009)).